The primary structure comprises 880 residues: Valine--tRNA ligase (880 aa).

Residues 49–59 (PNVTGKLHLGH) carry the 'HIGH' region motif. A 'KMSKS' region motif is present at residues 525–529 (KMSKS). Lys528 is a binding site for ATP. Residues 809–880 (LEGLINIEEE…VKARLAELKR (72 aa)) adopt a coiled-coil conformation.

The protein belongs to the class-I aminoacyl-tRNA synthetase family. ValS type 1 subfamily. As to quaternary structure, monomer.

The protein localises to the cytoplasm. The enzyme catalyses tRNA(Val) + L-valine + ATP = L-valyl-tRNA(Val) + AMP + diphosphate. In terms of biological role, catalyzes the attachment of valine to tRNA(Val). As ValRS can inadvertently accommodate and process structurally similar amino acids such as threonine, to avoid such errors, it has a 'posttransfer' editing activity that hydrolyzes mischarged Thr-tRNA(Val) in a tRNA-dependent manner. This is Valine--tRNA ligase from Geobacillus kaustophilus (strain HTA426).